The following is a 96-amino-acid chain: Small ribosomal subunit protein bS6 (96 aa).

The protein belongs to the bacterial ribosomal protein bS6 family.

Binds together with bS18 to 16S ribosomal RNA. This is Small ribosomal subunit protein bS6 from Streptococcus pneumoniae serotype 19F (strain G54).